The following is a 152-amino-acid chain: Transcriptional regulator MraZ (152 aa).

SpoVT-AbrB domains are found at residues 5–52 (ATLV…PLPE) and 81–124 (ASEC…DEQT).

It belongs to the MraZ family. Forms oligomers.

It is found in the cytoplasm. Its subcellular location is the nucleoid. Its function is as follows. Negatively regulates its own expression and that of the subsequent genes in the proximal part of the division and cell wall (dcw) gene cluster. Acts by binding directly to DNA. May also regulate the expression of genes outside the dcw cluster. The chain is Transcriptional regulator MraZ from Erwinia tasmaniensis (strain DSM 17950 / CFBP 7177 / CIP 109463 / NCPPB 4357 / Et1/99).